The following is a 255-amino-acid chain: Acetylglutamate kinase (255 aa).

Residues 40–41 (GG), Arg62, and Asn153 contribute to the substrate site.

The protein belongs to the acetylglutamate kinase family. ArgB subfamily.

Its subcellular location is the cytoplasm. It carries out the reaction N-acetyl-L-glutamate + ATP = N-acetyl-L-glutamyl 5-phosphate + ADP. Its pathway is amino-acid biosynthesis; L-arginine biosynthesis; N(2)-acetyl-L-ornithine from L-glutamate: step 2/4. Catalyzes the ATP-dependent phosphorylation of N-acetyl-L-glutamate. The chain is Acetylglutamate kinase from Bacillus thuringiensis (strain Al Hakam).